Reading from the N-terminus, the 193-residue chain is MIKNSYINEKLNFYQKSFLTCMLLIVIVIVYFFSKNYLDKPKNSYVHTKMMTFLTNSNELNISKNLIWTKKTISGNLMSLKLAKVYVINNQLEKALKILEKSKNNSVDLNFFNLISFKIAQIYFQKNNIKKAITTIKDILGDSWDSIRNNFIGDVYFKLDNQKRAVTLWKRSIIQNKKIEFEKIIQMKINNYN.

The Cytoplasmic segment spans residues methionine 1–leucine 11. The helical transmembrane segment at asparagine 12–serine 34 threads the bilayer. Over lysine 35 to asparagine 193 the chain is Extracellular.

This sequence belongs to the YfgM family. In terms of assembly, interacts with the Sec translocon. Forms a complex with PpiD.

Its subcellular location is the cell membrane. Functionally, may mediate protein transfer from the Sec translocon to the chaperone network via its extracellular C-terminal region. The sequence is that of Ancillary SecYEG translocon subunit from Buchnera aphidicola subsp. Baizongia pistaciae (strain Bp).